The primary structure comprises 456 residues: Myricetin 3-O-rhamnosyltransferase UGT77B2 (456 aa).

Histidine 19 acts as the Proton acceptor in catalysis. Histidine 19 is an an anthocyanidin binding site. The active-site Charge relay is aspartate 116. An anthocyanidin is bound at residue histidine 147. Residues threonine 279, alanine 334, histidine 351, asparagine 355, and glutamate 359 each contribute to the UDP-beta-L-rhamnose site. Position 374 (alanine 374) interacts with an anthocyanidin.

The protein belongs to the UDP-glycosyltransferase family. In terms of tissue distribution, expressed in young cromes.

The catalysed reaction is myricetin + UDP-beta-L-rhamnose = myricetin 3-O-alpha-L-rhamnoside + UDP + H(+). It functions in the pathway flavonoid metabolism. Rhamnosyltransferase involved in montbretin A (MbA) biosynthesis. Catalyzes the 3-O rhamnosylation of myricetin to produce myricetin 3-O-alpha-L-rhamnoside (MR), a precursor of MbA. MbA is a potent inhibitor of human pancreatic alpha-amylase and is being developed as drug candidate to treat type-2 diabetes. In vitro, is able to transfer UDP-glucose and UDP-xylose with 50-fold less efficiency compared with UDP-rhamnose. In vitro, can use kaempferol or quercetin as substrates, although these two flavonols may not be physiological substrates in vivo. The chain is Myricetin 3-O-rhamnosyltransferase UGT77B2 from Crocosmia x crocosmiiflora (Montbretia).